The primary structure comprises 263 residues: HTH-type transcriptional repressor NanR (263 aa).

Residues 30–98 enclose the HTH gntR-type domain; sequence KKLSEMVEEE…NGERARVSRP (69 aa). Residues 58 to 77 constitute a DNA-binding region (H-T-H motif); that stretch reads ERELMAFFNVGRPSVREALA.

This sequence belongs to the NanR family.

Its function is as follows. Transcriptional repressor that controls expression of the genes required for the catabolism of sialic acids. In Salmonella bongori (strain ATCC 43975 / DSM 13772 / NCTC 12419), this protein is HTH-type transcriptional repressor NanR.